The sequence spans 189 residues: Protein GrpE (189 aa).

The segment at 1–24 is disordered; it reads MADEQNLDTQNPEAQAAENAAPSD. Positions 10–24 are enriched in low complexity; the sequence is QNPEAQAAENAAPSD.

The protein belongs to the GrpE family. As to quaternary structure, homodimer.

The protein localises to the cytoplasm. In terms of biological role, participates actively in the response to hyperosmotic and heat shock by preventing the aggregation of stress-denatured proteins, in association with DnaK and GrpE. It is the nucleotide exchange factor for DnaK and may function as a thermosensor. Unfolded proteins bind initially to DnaJ; upon interaction with the DnaJ-bound protein, DnaK hydrolyzes its bound ATP, resulting in the formation of a stable complex. GrpE releases ADP from DnaK; ATP binding to DnaK triggers the release of the substrate protein, thus completing the reaction cycle. Several rounds of ATP-dependent interactions between DnaJ, DnaK and GrpE are required for fully efficient folding. The protein is Protein GrpE of Ectopseudomonas mendocina (strain ymp) (Pseudomonas mendocina).